We begin with the raw amino-acid sequence, 437 residues long: GTPase Obg (437 aa).

Residues 2 to 160 enclose the Obg domain; sequence SMFLDTAKIK…RNLELELKVL (159 aa). An OBG-type G domain is found at 161 to 338; sequence ADVGLVGFPS…LLEATAELLE (178 aa). Residues 167 to 174, 192 to 196, 214 to 217, 284 to 287, and 319 to 321 each bind GTP; these read GFPSVGKS, FTTIV, DLPG, NKMD, and SGI. 2 residues coordinate Mg(2+): serine 174 and threonine 194. The OCT domain occupies 359–437; the sequence is GFNPDEPEFA…IGKFEFEFVD (79 aa).

The protein belongs to the TRAFAC class OBG-HflX-like GTPase superfamily. OBG GTPase family. As to quaternary structure, monomer. Mg(2+) is required as a cofactor.

It is found in the cytoplasm. Its function is as follows. An essential GTPase which binds GTP, GDP and possibly (p)ppGpp with moderate affinity, with high nucleotide exchange rates and a fairly low GTP hydrolysis rate. Plays a role in control of the cell cycle, stress response, ribosome biogenesis and in those bacteria that undergo differentiation, in morphogenesis control. This is GTPase Obg from Streptococcus suis (strain 98HAH33).